Consider the following 89-residue polypeptide: Small ribosomal subunit protein uS15 (89 aa).

It belongs to the universal ribosomal protein uS15 family. Part of the 30S ribosomal subunit. Forms a bridge to the 50S subunit in the 70S ribosome, contacting the 23S rRNA.

Functionally, one of the primary rRNA binding proteins, it binds directly to 16S rRNA where it helps nucleate assembly of the platform of the 30S subunit by binding and bridging several RNA helices of the 16S rRNA. In terms of biological role, forms an intersubunit bridge (bridge B4) with the 23S rRNA of the 50S subunit in the ribosome. The polypeptide is Small ribosomal subunit protein uS15 (Bifidobacterium longum subsp. infantis (strain ATCC 15697 / DSM 20088 / JCM 1222 / NCTC 11817 / S12)).